The following is a 314-amino-acid chain: Hydroxyacyl-coenzyme A dehydrogenase, mitochondrial (314 aa).

The transit peptide at 1–12 (MAFVTRQFLRSM) directs the protein to the mitochondrion. NAD(+) contacts are provided by residues 34-39 (GGGLMG) and D57. S73 is a binding site for CoA. K75 is subject to N6-acetyllysine. K80 serves as a coordination point for CoA. K80 bears the N6-succinyllysine mark. 2 positions are modified to N6-acetyllysine; alternate: K81 and K87. An N6-succinyllysine; alternate mark is found at K81 and K87. E122 contributes to the NAD(+) binding site. Residue K125 is modified to N6-acetyllysine. K127 contacts NAD(+). Residue K127 is modified to N6-(2-hydroxyisobutyryl)lysine. The residue at position 136 (K136) is an N6-acetyllysine; alternate. K136 is modified (N6-succinyllysine; alternate). Residues S149 and N173 each coordinate NAD(+). Residue S149 participates in CoA binding. Position 179 is an N6-acetyllysine (K179). 3 positions are modified to N6-acetyllysine; alternate: K185, K192, and K202. K185, K192, and K202 each carry N6-succinyllysine; alternate. K206 carries the N6-succinyllysine modification. An N6-acetyllysine; alternate mark is found at K212 and K241. N6-succinyllysine; alternate is present on residues K212 and K241. Residue K305 coordinates NAD(+). An N6-acetyllysine; alternate modification is found at K312. Position 312 is an N6-succinyllysine; alternate (K312).

Belongs to the 3-hydroxyacyl-CoA dehydrogenase family. Homodimer. Interacts with GLUD1; this interaction inhibits the activation of glutamate dehydrogenase 1 (GLUD1). Post-translationally, succinylation at Lys-81, adjacent to a coenzyme A binding site. Desuccinylated by SIRT5. Expressed in liver, kidney, brain, and pancreatic islets.

The protein localises to the mitochondrion matrix. The protein resides in the nucleus. Its subcellular location is the cytoplasm. It is found in the cytosol. The catalysed reaction is a (3S)-3-hydroxyacyl-CoA + NAD(+) = a 3-oxoacyl-CoA + NADH + H(+). The enzyme catalyses (3S)-3-hydroxybutanoyl-CoA + NAD(+) = acetoacetyl-CoA + NADH + H(+). It carries out the reaction (3S)-hydroxydecanoyl-CoA + NAD(+) = 3-oxodecanoyl-CoA + NADH + H(+). It catalyses the reaction (3S)-hydroxyhexadecanoyl-CoA + NAD(+) = 3-oxohexadecanoyl-CoA + NADH + H(+). It functions in the pathway lipid metabolism; fatty acid beta-oxidation. In terms of biological role, mitochondrial fatty acid beta-oxidation enzyme that catalyzes the third step of the beta-oxidation cycle for medium and short-chain 3-hydroxy fatty acyl-CoAs (C4 to C10). Plays a role in the control of insulin secretion by inhibiting the activation of glutamate dehydrogenase 1 (GLUD1), an enzyme that has an important role in regulating amino acid-induced insulin secretion. Plays a role in the maintenance of normal spermatogenesis through the reduction of fatty acid accumulation in the testes. Inhibits cell proliferation. The chain is Hydroxyacyl-coenzyme A dehydrogenase, mitochondrial (Hadh) from Mus musculus (Mouse).